We begin with the raw amino-acid sequence, 567 residues long: Ribulokinase (567 aa).

The protein belongs to the ribulokinase family.

The enzyme catalyses D-ribulose + ATP = D-ribulose 5-phosphate + ADP + H(+). It carries out the reaction L-ribulose + ATP = L-ribulose 5-phosphate + ADP + H(+). It functions in the pathway carbohydrate degradation; L-arabinose degradation via L-ribulose; D-xylulose 5-phosphate from L-arabinose (bacterial route): step 2/3. This Vibrio parahaemolyticus serotype O3:K6 (strain RIMD 2210633) protein is Ribulokinase.